We begin with the raw amino-acid sequence, 162 residues long: NADH-quinone oxidoreductase subunit I (162 aa).

2 4Fe-4S ferredoxin-type domains span residues 53 to 83 and 93 to 122; these read LRRYPNGEERCIACKLCEAVCPAQAITIEAE and TRYDIDMTKCIYCGFCQEACPVDAIVEGPN. Positions 63, 66, 69, 73, 102, 105, 108, and 112 each coordinate [4Fe-4S] cluster.

The protein belongs to the complex I 23 kDa subunit family. In terms of assembly, NDH-1 is composed of 14 different subunits. Subunits NuoA, H, J, K, L, M, N constitute the membrane sector of the complex. [4Fe-4S] cluster is required as a cofactor.

It is found in the cell inner membrane. It catalyses the reaction a quinone + NADH + 5 H(+)(in) = a quinol + NAD(+) + 4 H(+)(out). In terms of biological role, NDH-1 shuttles electrons from NADH, via FMN and iron-sulfur (Fe-S) centers, to quinones in the respiratory chain. The immediate electron acceptor for the enzyme in this species is believed to be ubiquinone. Couples the redox reaction to proton translocation (for every two electrons transferred, four hydrogen ions are translocated across the cytoplasmic membrane), and thus conserves the redox energy in a proton gradient. This chain is NADH-quinone oxidoreductase subunit I, found in Sphingopyxis alaskensis (strain DSM 13593 / LMG 18877 / RB2256) (Sphingomonas alaskensis).